We begin with the raw amino-acid sequence, 200 residues long: Probable nicotinate-nucleotide adenylyltransferase (200 aa).

This sequence belongs to the NadD family.

It carries out the reaction nicotinate beta-D-ribonucleotide + ATP + H(+) = deamido-NAD(+) + diphosphate. The protein operates within cofactor biosynthesis; NAD(+) biosynthesis; deamido-NAD(+) from nicotinate D-ribonucleotide: step 1/1. In terms of biological role, catalyzes the reversible adenylation of nicotinate mononucleotide (NaMN) to nicotinic acid adenine dinucleotide (NaAD). This is Probable nicotinate-nucleotide adenylyltransferase from Clostridium acetobutylicum (strain ATCC 824 / DSM 792 / JCM 1419 / IAM 19013 / LMG 5710 / NBRC 13948 / NRRL B-527 / VKM B-1787 / 2291 / W).